Consider the following 260-residue polypeptide: uncharacterized protein (260 aa).

Residues 1–22 form the signal peptide; sequence MKHSKKLLLCISFLLITIFISG. C23 carries N-palmitoyl cysteine lipidation. C23 is lipidated: S-diacylglycerol cysteine.

The protein belongs to the staphylococcal tandem lipoprotein family.

The protein localises to the cell membrane. This is an uncharacterized protein from Staphylococcus epidermidis (strain ATCC 35984 / DSM 28319 / BCRC 17069 / CCUG 31568 / BM 3577 / RP62A).